We begin with the raw amino-acid sequence, 299 residues long: tRNA-cytidine(32) 2-sulfurtransferase (299 aa).

The PP-loop motif signature appears at 56 to 61 (SGGKDS). [4Fe-4S] cluster is bound by residues Cys-131, Cys-134, and Cys-222.

Belongs to the TtcA family. Homodimer. Mg(2+) is required as a cofactor. The cofactor is [4Fe-4S] cluster.

Its subcellular location is the cytoplasm. The enzyme catalyses cytidine(32) in tRNA + S-sulfanyl-L-cysteinyl-[cysteine desulfurase] + AH2 + ATP = 2-thiocytidine(32) in tRNA + L-cysteinyl-[cysteine desulfurase] + A + AMP + diphosphate + H(+). It participates in tRNA modification. Catalyzes the ATP-dependent 2-thiolation of cytidine in position 32 of tRNA, to form 2-thiocytidine (s(2)C32). The sulfur atoms are provided by the cysteine/cysteine desulfurase (IscS) system. The protein is tRNA-cytidine(32) 2-sulfurtransferase of Xylella fastidiosa (strain 9a5c).